The following is a 492-amino-acid chain: Katanin p60 ATPase-containing subunit A1 (492 aa).

Residues Pro91–Lys158 form a disordered region. Polar residues predominate over residues Leu138–Val147. Gly250–Thr257 lines the ATP pocket.

This sequence belongs to the AAA ATPase family. Katanin p60 subunit A1 subfamily. As to quaternary structure, can homooligomerize into hexameric rings, which may be promoted by interaction with microtubules. Interacts with katnb1, which may serve as a targeting subunit.

Its subcellular location is the cytoplasm. It is found in the cytoskeleton. The protein resides in the microtubule organizing center. The protein localises to the centrosome. It localises to the spindle pole. Its subcellular location is the spindle. It catalyses the reaction n ATP + n H2O + a microtubule = n ADP + n phosphate + (n+1) alpha/beta tubulin heterodimers.. Its activity is regulated as follows. ATPase activity is stimulated by microtubules, which promote homooligomerization. ATP-dependent microtubule severing is stimulated by interaction with katnb1. Catalytic subunit of a complex which severs microtubules in an ATP-dependent manner. Microtubule severing may promote rapid reorganization of cellular microtubule arrays and the release of microtubules from the centrosome following nucleation. This is Katanin p60 ATPase-containing subunit A1 (katna1) from Xenopus tropicalis (Western clawed frog).